The chain runs to 196 residues: Nucleoid occlusion factor SlmA (196 aa).

Residues 7–68 (TNRREEILQA…GLIEFIEEAL (62 aa)) form the HTH tetR-type domain. The H-T-H motif DNA-binding region spans 31 to 50 (TTAKLAKQVGVSEAALYRHF). Residues 110-142 (HALMFENERLRDRINQLFERIETQLRQILRERK) adopt a coiled-coil conformation.

This sequence belongs to the nucleoid occlusion factor SlmA family. As to quaternary structure, homodimer. Interacts with FtsZ.

The protein localises to the cytoplasm. It localises to the nucleoid. In terms of biological role, required for nucleoid occlusion (NO) phenomenon, which prevents Z-ring formation and cell division over the nucleoid. Acts as a DNA-associated cell division inhibitor that binds simultaneously chromosomal DNA and FtsZ, and disrupts the assembly of FtsZ polymers. SlmA-DNA-binding sequences (SBS) are dispersed on non-Ter regions of the chromosome, preventing FtsZ polymerization at these regions. This Vibrio campbellii (strain ATCC BAA-1116) protein is Nucleoid occlusion factor SlmA.